The sequence spans 371 residues: 4-hydroxybenzoate polyprenyltransferase, mitochondrial (371 aa).

The N-terminal 45 residues, 1–45, are a transit peptide targeting the mitochondrion; the sequence is MLGSCGAGLVRGLRAETQAWLWGTRGRSLALVHAARGLHAANWQP. At 46–83 the chain is on the mitochondrial matrix side; that stretch reads SPGQGPRGRPLSLSAAAVVNSAPRPLQPYLRLMRLDKP. Residues 84–104 traverse the membrane as a helical segment; the sequence is IGTWLLYLPCTWSIGLAADPG. Residues 105–108 are Mitochondrial intermembrane-facing; it reads CLPD. The helical transmembrane segment at 109 to 129 threads the bilayer; it reads WYMLSLFGTGAVLMRGAGCTI. Residues 130-171 lie on the Mitochondrial matrix side of the membrane; the sequence is NDMWDRDYDKKVTRTASRPIAAGDISTFRSFVFLGGQLTLAL. Residues 172-192 traverse the membrane as a helical segment; the sequence is GVLLCLNYYSIALGAASLLLV. The Mitochondrial intermembrane segment spans residues 193-200; sequence TTYPLMKR. The chain crosses the membrane as a helical span at residues 201–221; that stretch reads ITYWPQLALGLTFNWGALLGW. At 222-231 the chain is on the mitochondrial matrix side; sequence SAVKGSCDPS. A helical membrane pass occupies residues 232-252; it reads VCLPLYFSGIMWTLIYDTIYA. The Mitochondrial intermembrane portion of the chain corresponds to 253 to 277; that stretch reads HQDKKDDALIGLKSTALLFREDTKK. The helical transmembrane segment at 278-298 threads the bilayer; the sequence is WLSGFSVAMLGALSLVGVNSG. Topologically, residues 299–300 are mitochondrial matrix; that stretch reads QT. Residues 301–321 form a helical membrane-spanning segment; it reads MPYYTALAAVGAHLAHQIYTL. At 322-332 the chain is on the mitochondrial intermembrane side; it reads DINRPEDCWEK. Residues 333–353 traverse the membrane as a helical segment; sequence FTSNRTIGLIIFLGIVLGNLC. Over 354–371 the chain is Mitochondrial matrix; it reads KAKETDKTRKNIENRMEN.

This sequence belongs to the UbiA prenyltransferase family. The cofactor is Mg(2+).

It is found in the mitochondrion inner membrane. It catalyses the reaction an all-trans-polyprenyl diphosphate + 4-hydroxybenzoate = a 4-hydroxy-3-(all-trans-polyprenyl)benzoate + diphosphate. It carries out the reaction all-trans-decaprenyl diphosphate + 4-hydroxybenzoate = 4-hydroxy-3-(all-trans-decaprenyl)benzoate + diphosphate. The catalysed reaction is all-trans-nonaprenyl diphosphate + 4-hydroxybenzoate = 4-hydroxy-3-(all-trans-nonaprenyl)benzoate + diphosphate. Its pathway is cofactor biosynthesis; ubiquinone biosynthesis. In terms of biological role, mediates the second step in the final reaction sequence of coenzyme Q (CoQ) biosynthesis. Catalyzes the prenylation of para-hydroxybenzoate (PHB) with an all-trans polyprenyl donor (such as all-trans-decaprenyl diphosphate). The length of the polyprenyl side chain varies depending on the species, in humans, the side chain is comprised of 10 isoprenyls (decaprenyl) producing CoQ10 (also known as ubiquinone), whereas rodents predominantly generate CoQ9. However, this specificity is not complete, human tissues have low amounts of CoQ9 and rodent organs contain some CoQ10. Plays a central role in the biosynthesis of CoQ10. CoQ10 is a vital molecule that transports electrons from mitochondrial respiratory chain complexes. CoQs also function as cofactors for uncoupling protein and play a role as regulators of the extracellularly-induced ceramide-dependent apoptotic pathway. Regulates mitochondrial permeability transition pore (mPTP) opening and ROS production (pivotal events in cell death) in a tissue specific manner. This is 4-hydroxybenzoate polyprenyltransferase, mitochondrial from Bos taurus (Bovine).